The sequence spans 206 residues: Urease accessory protein UreG (206 aa).

A GTP-binding site is contributed by 11–18; that stretch reads GPVGSGKT.

This sequence belongs to the SIMIBI class G3E GTPase family. UreG subfamily. Homodimer. UreD, UreF and UreG form a complex that acts as a GTP-hydrolysis-dependent molecular chaperone, activating the urease apoprotein by helping to assemble the nickel containing metallocenter of UreC. The UreE protein probably delivers the nickel.

It is found in the cytoplasm. Functionally, facilitates the functional incorporation of the urease nickel metallocenter. This process requires GTP hydrolysis, probably effectuated by UreG. The chain is Urease accessory protein UreG from Mycolicibacterium gilvum (strain PYR-GCK) (Mycobacterium gilvum (strain PYR-GCK)).